The primary structure comprises 126 residues: Protein ApaG (126 aa).

Positions 2 to 126 constitute an ApaG domain; sequence SQLTSSVRVD…FRLSIPGLLH (125 aa).

This chain is Protein ApaG, found in Shewanella halifaxensis (strain HAW-EB4).